The following is a 156-amino-acid chain: ATP synthase subunit b (156 aa).

The chain crosses the membrane as a helical span at residues 12-32 (VAFLIFVLFCMKFVWPPVIAA).

This sequence belongs to the ATPase B chain family. In terms of assembly, F-type ATPases have 2 components, F(1) - the catalytic core - and F(0) - the membrane proton channel. F(1) has five subunits: alpha(3), beta(3), gamma(1), delta(1), epsilon(1). F(0) has three main subunits: a(1), b(2) and c(10-14). The alpha and beta chains form an alternating ring which encloses part of the gamma chain. F(1) is attached to F(0) by a central stalk formed by the gamma and epsilon chains, while a peripheral stalk is formed by the delta and b chains.

Its subcellular location is the cell inner membrane. In terms of biological role, f(1)F(0) ATP synthase produces ATP from ADP in the presence of a proton or sodium gradient. F-type ATPases consist of two structural domains, F(1) containing the extramembraneous catalytic core and F(0) containing the membrane proton channel, linked together by a central stalk and a peripheral stalk. During catalysis, ATP synthesis in the catalytic domain of F(1) is coupled via a rotary mechanism of the central stalk subunits to proton translocation. Functionally, component of the F(0) channel, it forms part of the peripheral stalk, linking F(1) to F(0). This is ATP synthase subunit b from Pseudomonas fluorescens (strain Pf0-1).